Reading from the N-terminus, the 329-residue chain is Quinolinate synthase (329 aa).

The iminosuccinate site is built by His-44 and Ser-61. Cys-106 contacts [4Fe-4S] cluster. Residues 132-134 and Ser-149 contribute to the iminosuccinate site; that span reads YIN. Position 192 (Cys-192) interacts with [4Fe-4S] cluster. Residues 218 to 220 and Thr-235 contribute to the iminosuccinate site; that span reads HPE. [4Fe-4S] cluster is bound at residue Cys-285.

This sequence belongs to the quinolinate synthase family. Type 2 subfamily. Requires [4Fe-4S] cluster as cofactor.

It is found in the plastid. Its subcellular location is the cyanelle. It carries out the reaction iminosuccinate + dihydroxyacetone phosphate = quinolinate + phosphate + 2 H2O + H(+). It participates in cofactor biosynthesis; NAD(+) biosynthesis; quinolinate from iminoaspartate: step 1/1. In terms of biological role, catalyzes the condensation of iminoaspartate with dihydroxyacetone phosphate to form quinolinate. This chain is Quinolinate synthase, found in Cyanophora paradoxa.